The sequence spans 401 residues: Probable sodium/metabolite cotransporter BASS1, chloroplastic (401 aa).

A chloroplast-targeting transit peptide spans 1-70; the sequence is MASAISLSLL…RRSRFDFVPR (70 aa). 9 helical membrane passes run 92–112, 122–142, 156–176, 187–207, 212–232, 247–267, 278–298, 311–331, and 371–391; these read FVGE…CLLG, VTPN…GMTL, ELFA…FFVS, AGLI…VTYI, VALS…MTPL, LGLL…GAFL, VSPV…GYAI, QVVL…YLFS, and VPCA…AGIW.

Belongs to the bile acid:sodium symporter (BASS) (TC 2.A.28) family.

The protein resides in the membrane. Its subcellular location is the plastid. The protein localises to the chloroplast envelope. Functionally, may function as sodium-coupled metabolite transporter across the chloroplast envelope. This is Probable sodium/metabolite cotransporter BASS1, chloroplastic (BASS1) from Arabidopsis thaliana (Mouse-ear cress).